Here is a 224-residue protein sequence, read N- to C-terminus: Phosphoglycolate phosphatase (224 aa).

D11 acts as the Nucleophile in catalysis. D11, D13, and D177 together coordinate Mg(2+).

This sequence belongs to the HAD-like hydrolase superfamily. CbbY/CbbZ/Gph/YieH family. Requires Mg(2+) as cofactor.

The enzyme catalyses 2-phosphoglycolate + H2O = glycolate + phosphate. It functions in the pathway organic acid metabolism; glycolate biosynthesis; glycolate from 2-phosphoglycolate: step 1/1. Its function is as follows. Specifically catalyzes the dephosphorylation of 2-phosphoglycolate. Is involved in the dissimilation of the intracellular 2-phosphoglycolate formed during the DNA repair of 3'-phosphoglycolate ends, a major class of DNA lesions induced by oxidative stress. The protein is Phosphoglycolate phosphatase of Haemophilus influenzae (strain 86-028NP).